The chain runs to 105 residues: Small ribosomal subunit protein uS10 (105 aa).

It belongs to the universal ribosomal protein uS10 family. Part of the 30S ribosomal subunit.

Functionally, involved in the binding of tRNA to the ribosomes. The chain is Small ribosomal subunit protein uS10 from Phytoplasma australiense.